Here is a 214-residue protein sequence, read N- to C-terminus: Phosphoenolpyruvate guanylyltransferase (214 aa).

Positions 139, 155, and 158 each coordinate phosphoenolpyruvate.

It belongs to the CofC family.

The enzyme catalyses phosphoenolpyruvate + GTP + H(+) = enolpyruvoyl-2-diphospho-5'-guanosine + diphosphate. It participates in cofactor biosynthesis; coenzyme F420 biosynthesis. Its function is as follows. Guanylyltransferase that catalyzes the activation of phosphoenolpyruvate (PEP) as enolpyruvoyl-2-diphospho-5'-guanosine, via the condensation of PEP with GTP. It is involved in the biosynthesis of coenzyme F420, a hydride carrier cofactor. This is Phosphoenolpyruvate guanylyltransferase from Salinispora arenicola (strain CNS-205).